Consider the following 694-residue polypeptide: Glycine--tRNA ligase beta subunit (694 aa).

The protein belongs to the class-II aminoacyl-tRNA synthetase family. Tetramer of two alpha and two beta subunits.

The protein resides in the cytoplasm. It carries out the reaction tRNA(Gly) + glycine + ATP = glycyl-tRNA(Gly) + AMP + diphosphate. This is Glycine--tRNA ligase beta subunit from Shewanella denitrificans (strain OS217 / ATCC BAA-1090 / DSM 15013).